The primary structure comprises 203 residues: MSQLSLTLLMIVAAYLAGSVSSAVLVCRMRGLPDPRSQGSGNPGATNVLRIGGASSAAMVLFFDMLKGALPTYLAYLMGIDAISLGLIAIAACLGHIYPVFFGFKGGKGVATAFGAMAPIGDDLAICLMASWVVLVLISRYSSLAAIITALLAPLYTWWLDDRFTIPVAMLSTLIIIRHKDNIKRLLKGEESKVSRKRRPKIP.

Helical transmembrane passes span 6–26 (LTLL…AVLV), 82–102 (AISL…PVFF), 118–138 (APIG…LVLI), and 141–161 (YSSL…WWLD).

Belongs to the PlsY family. In terms of assembly, probably interacts with PlsX.

It is found in the cell inner membrane. It catalyses the reaction an acyl phosphate + sn-glycerol 3-phosphate = a 1-acyl-sn-glycero-3-phosphate + phosphate. It functions in the pathway lipid metabolism; phospholipid metabolism. Catalyzes the transfer of an acyl group from acyl-phosphate (acyl-PO(4)) to glycerol-3-phosphate (G3P) to form lysophosphatidic acid (LPA). This enzyme utilizes acyl-phosphate as fatty acyl donor, but not acyl-CoA or acyl-ACP. This chain is Glycerol-3-phosphate acyltransferase, found in Shewanella oneidensis (strain ATCC 700550 / JCM 31522 / CIP 106686 / LMG 19005 / NCIMB 14063 / MR-1).